A 652-amino-acid chain; its full sequence is Ethylmalonyl-CoA mutase (652 aa).

The B12-binding domain occupies 519–647; the sequence is PLKFVVGKPG…MDIVGLVDRT (129 aa). Adenosylcob(III)alamin is bound at residue His532.

Belongs to the methylmalonyl-CoA mutase family. In terms of assembly, homodimer. The cofactor is adenosylcob(III)alamin.

The catalysed reaction is (2R)-ethylmalonyl-CoA = (2S)-methylsuccinyl-CoA. In terms of biological role, radical enzyme that catalyzes the transformation of (2R)-ethylmalonyl-CoA to (2S)-methylsuccinyl-CoA. Is involved in the ethylmalonyl-CoA pathway for acetyl-CoA assimilation required for R.sphaeroides growth on acetate as sole carbon source. Is highly specific for its substrate, ethylmalonyl-CoA, and accepts methylmalonyl-CoA only at 0.2% relative activity. The protein is Ethylmalonyl-CoA mutase of Cereibacter sphaeroides (strain ATCC 17023 / DSM 158 / JCM 6121 / CCUG 31486 / LMG 2827 / NBRC 12203 / NCIMB 8253 / ATH 2.4.1.) (Rhodobacter sphaeroides).